Consider the following 197-residue polypeptide: Imidazoleglycerol-phosphate dehydratase (197 aa).

This sequence belongs to the imidazoleglycerol-phosphate dehydratase family.

Its subcellular location is the cytoplasm. The catalysed reaction is D-erythro-1-(imidazol-4-yl)glycerol 3-phosphate = 3-(imidazol-4-yl)-2-oxopropyl phosphate + H2O. It participates in amino-acid biosynthesis; L-histidine biosynthesis; L-histidine from 5-phospho-alpha-D-ribose 1-diphosphate: step 6/9. This Pseudomonas syringae pv. syringae (strain B728a) protein is Imidazoleglycerol-phosphate dehydratase.